Consider the following 246-residue polypeptide: Small ribosomal subunit protein uS2 (246 aa).

The disordered stretch occupies residues 224-246 (AKQGEEEAEAAEETAPETETTTA). Residues 229–239 (EEAEAAEETAP) are compositionally biased toward acidic residues.

This sequence belongs to the universal ribosomal protein uS2 family.

This Bacillus velezensis (strain DSM 23117 / BGSC 10A6 / LMG 26770 / FZB42) (Bacillus amyloliquefaciens subsp. plantarum) protein is Small ribosomal subunit protein uS2.